A 253-amino-acid polypeptide reads, in one-letter code: Hydroxyacylglutathione hydrolase (253 aa).

Zn(2+) contacts are provided by histidine 54, histidine 56, aspartate 58, histidine 59, histidine 112, aspartate 131, and histidine 169.

The protein belongs to the metallo-beta-lactamase superfamily. Glyoxalase II family. As to quaternary structure, monomer. The cofactor is Zn(2+).

The enzyme catalyses an S-(2-hydroxyacyl)glutathione + H2O = a 2-hydroxy carboxylate + glutathione + H(+). It participates in secondary metabolite metabolism; methylglyoxal degradation; (R)-lactate from methylglyoxal: step 2/2. Thiolesterase that catalyzes the hydrolysis of S-D-lactoyl-glutathione to form glutathione and D-lactic acid. This Bartonella henselae (strain ATCC 49882 / DSM 28221 / CCUG 30454 / Houston 1) (Rochalimaea henselae) protein is Hydroxyacylglutathione hydrolase.